The primary structure comprises 461 residues: Phenolic glucoside malonyltransferase 1 (461 aa).

Histidine 167 functions as the Proton acceptor in the catalytic mechanism. Residues 167-171 (HAAQD) carry the HXXXD motif motif. A malonyl-CoA-binding site is contributed by 281-282 (ST). The active-site Proton acceptor is the aspartate 400. The DFGWG motif motif lies at 400–404 (DFGWG).

Belongs to the plant acyltransferase family. Phenolic glucoside malonyltransferase subfamily. Expressed in all tissues. Most highly expressed in the abdomen and especially in the gut.

The catalysed reaction is a flavonol 3-O-beta-D-glucoside + malonyl-CoA = a flavonol 3-O-(6-O-malonyl-beta-D-glucoside) + CoA. It catalyses the reaction kaempferol 3-O-beta-D-glucoside + malonyl-CoA = kaempferol 3-O-(6-O-malonyl-beta-D-glucoside) + CoA. The enzyme catalyses quercetin 3-O-beta-D-glucoside + malonyl-CoA = quercetin 3-O-(6-O-malonyl-beta-D-glucoside) + CoA. It carries out the reaction a flavonol 7-O-beta-D-glucoside + malonyl-CoA = a flavonol 7-O-(6-O-malonyl-beta-D-glucoside) + CoA. The catalysed reaction is (2S)-naringenin 7-O-beta-D-glucoside + malonyl-CoA = (2S)-naringenin 7-O-(6-O-malonyl-beta-D-glucoside) + CoA. It catalyses the reaction kaempferol 7-O-beta-D-glucoside + malonyl-CoA = kaempferol 7-O-(6-O-malonyl-beta-D-glucoside) + CoA. The enzyme catalyses apigenin 7-O-beta-D-glucoside + malonyl-CoA = apigenin 7-O-(6-O-malonyl-beta-D-glucoside) + CoA. It carries out the reaction rhaponticin + malonyl-CoA = 6-O-malonyl-rhaponticin + CoA. In terms of biological role, phenolic glucoside malonyltransferase that neutralizes phenolic glycosides in host plants. Catalyzes the transfer of a malonyl group from malonyl-CoA to the phenolic glycosides, leading to their detoxification. Phenolic glycosides, which are among the most abundant plant secondary metabolites, act as plant defense compounds: they strongly affect growth, development and behavior of insect herbivores. Has malonyltransferase activity against flavonoids kaempferol 3-O-glucoside, kaempferol 7-O-glucoside, isoquercetin (quercetin 3-O-beta-D-glucopyranoside), apigetrin (apigenin 7-O-beta-D-glucoside) and prunin (naringenin 7-O-beta-D-glucoside). Also has activity toward non-flavonoid rhaponticin, but with lower efficiency. The polypeptide is Phenolic glucoside malonyltransferase 1 (Bemisia tabaci (Sweetpotato whitefly)).